The primary structure comprises 245 residues: 2,3-bisphosphoglycerate-dependent phosphoglycerate mutase (245 aa).

Substrate contacts are provided by residues 8–15 (RHGQSLWN), 21–22 (TG), Arg60, 87–90 (ERHY), Lys98, 114–115 (RR), and 183–184 (GN). The active-site Tele-phosphohistidine intermediate is the His9. The Proton donor/acceptor role is filled by Glu87.

The protein belongs to the phosphoglycerate mutase family. BPG-dependent PGAM subfamily.

The catalysed reaction is (2R)-2-phosphoglycerate = (2R)-3-phosphoglycerate. It functions in the pathway carbohydrate degradation; glycolysis; pyruvate from D-glyceraldehyde 3-phosphate: step 3/5. Its function is as follows. Catalyzes the interconversion of 2-phosphoglycerate and 3-phosphoglycerate. In Bacillus thuringiensis subsp. konkukian (strain 97-27), this protein is 2,3-bisphosphoglycerate-dependent phosphoglycerate mutase.